Consider the following 909-residue polypeptide: DNA mismatch repair protein MutS (909 aa).

The segment covering 275–290 (QKAERPPLSRPEREEQ) has biased composition (basic and acidic residues). The disordered stretch occupies residues 275 to 295 (QKAERPPLSRPEREEQGSTLF). Residue 661 to 668 (GPNMGGKS) participates in ATP binding.

It belongs to the DNA mismatch repair MutS family.

In terms of biological role, this protein is involved in the repair of mismatches in DNA. It is possible that it carries out the mismatch recognition step. This protein has a weak ATPase activity. In Mesorhizobium japonicum (strain LMG 29417 / CECT 9101 / MAFF 303099) (Mesorhizobium loti (strain MAFF 303099)), this protein is DNA mismatch repair protein MutS.